The sequence spans 34 residues: Photosystem II reaction center protein M (34 aa).

The chain crosses the membrane as a helical span at residues 5–25 (ILAFSATALLILFPTALLLIL).

Belongs to the PsbM family. PSII is composed of 1 copy each of membrane proteins PsbA, PsbB, PsbC, PsbD, PsbE, PsbF, PsbH, PsbI, PsbJ, PsbK, PsbL, PsbM, PsbT, PsbX, PsbY, PsbZ, Psb30/Ycf12, at least 3 peripheral proteins of the oxygen-evolving complex and a large number of cofactors. It forms dimeric complexes.

The protein resides in the plastid membrane. Functionally, one of the components of the core complex of photosystem II (PSII). PSII is a light-driven water:plastoquinone oxidoreductase that uses light energy to abstract electrons from H(2)O, generating O(2) and a proton gradient subsequently used for ATP formation. It consists of a core antenna complex that captures photons, and an electron transfer chain that converts photonic excitation into a charge separation. This subunit is found at the monomer-monomer interface. This Cuscuta gronovii (Common dodder) protein is Photosystem II reaction center protein M.